Reading from the N-terminus, the 479-residue chain is Aspartyl/glutamyl-tRNA(Asn/Gln) amidotransferase subunit B (479 aa).

It belongs to the GatB/GatE family. GatB subfamily. As to quaternary structure, heterotrimer of A, B and C subunits.

It carries out the reaction L-glutamyl-tRNA(Gln) + L-glutamine + ATP + H2O = L-glutaminyl-tRNA(Gln) + L-glutamate + ADP + phosphate + H(+). It catalyses the reaction L-aspartyl-tRNA(Asn) + L-glutamine + ATP + H2O = L-asparaginyl-tRNA(Asn) + L-glutamate + ADP + phosphate + 2 H(+). Allows the formation of correctly charged Asn-tRNA(Asn) or Gln-tRNA(Gln) through the transamidation of misacylated Asp-tRNA(Asn) or Glu-tRNA(Gln) in organisms which lack either or both of asparaginyl-tRNA or glutaminyl-tRNA synthetases. The reaction takes place in the presence of glutamine and ATP through an activated phospho-Asp-tRNA(Asn) or phospho-Glu-tRNA(Gln). The protein is Aspartyl/glutamyl-tRNA(Asn/Gln) amidotransferase subunit B of Clostridium beijerinckii (strain ATCC 51743 / NCIMB 8052) (Clostridium acetobutylicum).